We begin with the raw amino-acid sequence, 333 residues long: Transcription initiation factor IIB (333 aa).

The segment at glutamate 33–glutamine 64 adopts a TFIIB-type zinc-finger fold. Positions 37, 40, 56, and 59 each coordinate Zn(2+). 2 tandem repeats follow at residues glutamine 149 to leucine 232 and leucine 243 to lysine 324.

This sequence belongs to the TFIIB family.

In terms of biological role, stabilizes TBP binding to an archaeal box-A promoter. Also responsible for recruiting RNA polymerase II to the pre-initiation complex (DNA-TBP-TFIIB). The chain is Transcription initiation factor IIB from Pyrobaculum neutrophilum (strain DSM 2338 / JCM 9278 / NBRC 100436 / V24Sta) (Thermoproteus neutrophilus).